The following is a 140-amino-acid chain: Large ribosomal subunit protein uL22 (140 aa).

It belongs to the universal ribosomal protein uL22 family. Part of the 50S ribosomal subunit.

In terms of biological role, this protein binds specifically to 23S rRNA; its binding is stimulated by other ribosomal proteins, e.g. L4, L17, and L20. It is important during the early stages of 50S assembly. It makes multiple contacts with different domains of the 23S rRNA in the assembled 50S subunit and ribosome. Its function is as follows. The globular domain of the protein is located near the polypeptide exit tunnel on the outside of the subunit, while an extended beta-hairpin is found that lines the wall of the exit tunnel in the center of the 70S ribosome. The sequence is that of Large ribosomal subunit protein uL22 from Parafrankia sp. (strain EAN1pec).